A 340-amino-acid polypeptide reads, in one-letter code: Serpentine receptor class alpha-18 (340 aa).

The next 6 membrane-spanning stretches (helical) occupy residues 29–49 (FNFIFIITVVLISYCFTWLAI), 109–129 (VFELYLYYPTGYFSTYSVFSL), 149–169 (FIATSLLVLQLLLTMFSFYIV), 198–218 (VRTGVMVSCIIVTMFVYYVCV), 249–269 (ISIVLQFSCIMISSFGSNLLI), and 285–305 (IVSFLPGVTYANLCLPLVIYF).

The protein belongs to the nematode receptor-like protein sra family.

The protein localises to the membrane. The protein is Serpentine receptor class alpha-18 (sra-18) of Caenorhabditis elegans.